The sequence spans 185 residues: Ribosome-recycling factor (185 aa).

This sequence belongs to the RRF family.

It localises to the cytoplasm. Its function is as follows. Responsible for the release of ribosomes from messenger RNA at the termination of protein biosynthesis. May increase the efficiency of translation by recycling ribosomes from one round of translation to another. In Streptococcus thermophilus (strain CNRZ 1066), this protein is Ribosome-recycling factor.